The chain runs to 228 residues: Leucyl/phenylalanyl-tRNA--protein transferase (228 aa).

The protein belongs to the L/F-transferase family.

Its subcellular location is the cytoplasm. It catalyses the reaction N-terminal L-lysyl-[protein] + L-leucyl-tRNA(Leu) = N-terminal L-leucyl-L-lysyl-[protein] + tRNA(Leu) + H(+). The catalysed reaction is N-terminal L-arginyl-[protein] + L-leucyl-tRNA(Leu) = N-terminal L-leucyl-L-arginyl-[protein] + tRNA(Leu) + H(+). The enzyme catalyses L-phenylalanyl-tRNA(Phe) + an N-terminal L-alpha-aminoacyl-[protein] = an N-terminal L-phenylalanyl-L-alpha-aminoacyl-[protein] + tRNA(Phe). In terms of biological role, functions in the N-end rule pathway of protein degradation where it conjugates Leu, Phe and, less efficiently, Met from aminoacyl-tRNAs to the N-termini of proteins containing an N-terminal arginine or lysine. In Thiobacillus denitrificans (strain ATCC 25259 / T1), this protein is Leucyl/phenylalanyl-tRNA--protein transferase.